The primary structure comprises 664 residues: Prelamin-A/C (664 aa).

An N-acetylmethionine modification is found at Met1. Residues 1-25 are disordered; the sequence is METPSQRRATRSGAQASSTPLSPTR. Positions 1–33 are head; the sequence is METPSQRRATRSGAQASSTPLSPTRITRLQEKE. Positions 1–130 are interaction with MLIP; it reads METPSQRRAT…TKKEGDLIAA (130 aa). Position 3 is a phosphothreonine (Thr3). Ser5 carries the post-translational modification Phosphoserine. Phosphothreonine is present on Thr10. Phosphoserine occurs at positions 12 and 18. At Thr19 the chain carries Phosphothreonine. Phosphoserine; by CDK1 is present on Ser22. One can recognise an IF rod domain in the interval 31–387; sequence EKEDLQELND…KLLEGEEERL (357 aa). Lys32 bears the N6-acetyllysine; alternate mark. Lys32 carries the post-translational modification N6-succinyllysine; alternate. Residue Lys32 forms a Glycyl lysine isopeptide (Lys-Gly) (interchain with G-Cter in SUMO2); alternate linkage. The tract at residues 34–70 is coil 1A; sequence DLQELNDRLAVYIDRVRSLETENAGLRLRITESEEVV. Ser51, Ser66, and Ser71 each carry phosphoserine. Residues 71-80 are linker 1; that stretch reads SREVSGIKAA. N6-acetyllysine is present on residues Lys78 and Lys97. The tract at residues 81-218 is coil 1B; sequence YEAELGDARK…NIYSEELRET (138 aa). Lys97 is covalently cross-linked (Glycyl lysine isopeptide (Lys-Gly) (interchain with G-Cter in SUMO2)). At Ser107 the chain carries Phosphoserine. Residues Lys108, Lys114, Lys123, Lys135, Lys144, and Lys155 each carry the N6-acetyllysine modification. Lys171 carries the N6-acetyllysine; alternate modification. Lys171 is subject to N6-succinyllysine; alternate. A Glycyl lysine isopeptide (Lys-Gly) (interchain with G-Cter in SUMO2); alternate cross-link involves residue Lys171. N6-acetyllysine is present on residues Lys180, Lys201, and Lys208. A Glycyl lysine isopeptide (Lys-Gly) (interchain with G-Cter in SUMO2); alternate cross-link involves residue Lys201. A Glycyl lysine isopeptide (Lys-Gly) (interchain with G-Cter in SUMO); alternate cross-link involves residue Lys201. A Glycyl lysine isopeptide (Lys-Gly) (interchain with G-Cter in SUMO2) cross-link involves residue Lys208. Ser212 carries the phosphoserine modification. Glycyl lysine isopeptide (Lys-Gly) (interchain with G-Cter in SUMO2) cross-links involve residues Lys219 and Lys233. The tract at residues 219–242 is linker 2; that stretch reads KRRHETRLVEIDNGKQREFESRLA. 4 positions are modified to N6-acetyllysine: Lys233, Lys260, Lys265, and Lys270. The segment at 243–383 is coil 2; that stretch reads DALQELRAQH…HAYRKLLEGE (141 aa). The interval 259–331 is necessary and sufficient for the interaction with IFFO1; the sequence is YKKELEKTYS…DLEDSLARER (73 aa). Residue Lys260 forms a Glycyl lysine isopeptide (Lys-Gly) (interchain with G-Cter in SUMO2); alternate linkage. Lys270 participates in a covalent cross-link: Glycyl lysine isopeptide (Lys-Gly) (interchain with G-Cter in SUMO2); alternate. Ser277 carries the post-translational modification Phosphoserine. Ser282 is subject to Phosphoserine; by ATR. 2 positions are modified to phosphoserine: Ser301 and Ser307. A Glycyl lysine isopeptide (Lys-Gly) (interchain with G-Cter in SUMO2); alternate cross-link involves residue Lys311. N6-acetyllysine occurs at positions 311, 316, and 341. Residues Lys366 and Lys378 each participate in a glycyl lysine isopeptide (Lys-Gly) (interchain with G-Cter in SUMO2) cross-link. Residues 384-442 form a disordered region; that stretch reads EERLRLSPSPTSQRSRGRASSHSSQTQGGGSVTKKRKLESTESRSSFSQHARTSGRVAV. The tract at residues 384 to 664 is tail; that stretch reads EERLRLSPSP…TQSPQNCSIM (281 aa). At Ser390 the chain carries Phosphoserine. Ser392 carries the phosphoserine; by CDK1 modification. Phosphoserine; by ATR is present on Ser395. 6 positions are modified to phosphoserine: Ser398, Ser403, Ser404, Ser406, Ser407, and Ser414. Thr416 is modified (phosphothreonine). The residue at position 417 (Lys417) is an N6-acetyllysine. Residues Lys417 and Lys420 each participate in a glycyl lysine isopeptide (Lys-Gly) (interchain with G-Cter in SUMO2) cross-link. The Nuclear localization signal motif lies at 417–422; it reads KKRKLE. Phosphoserine is present on residues Ser423, Ser426, Ser429, and Ser431. The segment covering 426 to 435 has biased composition (polar residues); that stretch reads SRSSFSQHAR. The 118-residue stretch at 428–545 folds into the LTD domain; sequence SSFSQHARTS…EEVAMRKLVR (118 aa). A Glycyl lysine isopeptide (Lys-Gly) (interchain with G-Cter in SUMO2); alternate cross-link involves residue Lys450. N6-acetyllysine occurs at positions 450 and 457. Residues Ser458 and Ser463 each carry the phosphoserine modification. Glycyl lysine isopeptide (Lys-Gly) (interchain with G-Cter in SUMO2) cross-links involve residues Lys470 and Lys486. Lys486 carries the post-translational modification N6-acetyllysine. A phosphothreonine mark is found at Thr496, Thr505, and Thr510. Phosphoserine occurs at positions 533 and 546. Thr548 is modified (phosphothreonine). The interval 552–576 is disordered; the sequence is DDEDEDGDDLLHHHHGSHCSSSGDP. Ser568 and Ser571 each carry phosphoserine. Residue Lys597 forms a Glycyl lysine isopeptide (Lys-Gly) (interchain with G-Cter in SUMO2); alternate linkage. A Glycyl lysine isopeptide (Lys-Gly) (interchain with G-Cter in SUMO1); alternate cross-link involves residue Lys597. The interval 598-619 is disordered; sequence ASASGSGAQVGGPISSGSSASS. A phosphoserine mark is found at Ser612, Ser613, Ser616, and Ser619. Residues Ser625 and Ser628 are each glycosylated (O-linked (GlcNAc) serine). 4 positions are modified to phosphoserine: Ser628, Ser632, Ser636, and Ser652. A propeptide spans 647–661 (removed in Lamin-A/C form); sequence LLGNSSPRTQSPQNC. Cys661 is modified (cysteine methyl ester). The S-farnesyl cysteine moiety is linked to residue Cys661. Residues 662–664 constitute a propeptide, removed in Prelamin-A/C form and in Lamin-A/C form; it reads SIM.

This sequence belongs to the intermediate filament family. In terms of assembly, homodimer of lamin A and lamin C. Lamin dimers then assemble into dimeric head-to-tail polymers. Ultimately, two head-to-tail polymers assemble laterally into a protofilament with a uniformly shaped rod of 3.5 nm in diameter. Interacts with lamin-associated polypeptides IA, IB and TMPO-alpha, RB1 and with emerin. Interacts with SREBF1, SREBF2, SUN2 and TMEM43. Interacts with TMEM201. Proteolytically processed isoform A interacts with NARF. Interacts with SUN1. Interacts with MLIP. Interacts with DMPK; may regulate nuclear envelope stability. Interacts with SUV39H1; the interaction increases stability of SUV39H1. Interacts with SYNE2. Interacts with ITSN1 isoform 2. Interacts with IFFO1; enables the formation of an interior nucleoskeleton that is recruited to DNA double-strand breaks. Interacts with EMD. As to quaternary structure, interacts (via C-terminus) with LEMD2 (via N-terminus) (in vitro). Post-translationally, proteolytic cleavage of the C-terminal of 18 residues of prelamin-A/C results in the production of lamin-A/C. The prelamin-A/C maturation pathway includes farnesylation of CAAX motif by protein farnesyltransferase (FNTA and FNTB), removal of the last three amino acids (-AAX) by RCE1/FACE2 and/or ZMPSTE24, methylation of the C-terminal cysteine by ICMT and endoproteolytic removal of the last 15 C-terminal amino acids by ZMPSTE24. Proteolytic cleavage requires prior farnesylation and methylation, and absence of these blocks cleavage. Farnesylation of prelamin-A/C facilitates nuclear envelope targeting. In terms of processing, phosphorylation plays a key role in lamin organization, subcellular localization and nuclear envelope disintegration. Phosphorylation by CDK1 at Ser-22 and Ser-392 at the onset of mitosis drives lamin disassembly and nuclear envelope breakdown. Phosphorylation at Ser-22 and Ser-392 during interphase promotes localization to the nucleoplasm and regulates lamina assembly. Phosphorylation at Ser-22, Ser-392 and Ser-628 during interphase causes redistribution between the nucleus and the cytoplasm. Phosphorylation at Ser-22 by CDK1 regulates matrix stiffness. Phosphorylation status of Ser-22 determines its localization between double-strand break (DSB) sites and the nuclear matrix. Phosphorylated by ATR at Ser-282 in response to DNA damage, leading to lamin disassembly and nuclear envelope rupture. Phosphorylation also regulates stability in micronuclei arising from genome instability: phosphorylation at Ser-395 by ATR in response to genome instability and double-stranded DNA breaks primes LMNA for subsequent phosphorylation at Ser-392 by CDK1 and micronuclei envelope rupture. The rupture of micronuclear envelope triggers the cGAS-STING pathway thereby activating the type I interferon response and innate immunity. Post-translationally, acetylation by KAT8 is required for nuclear architecture. Sumoylation is necessary for the localization to the nuclear envelope. In terms of tissue distribution, in the arteries, prelamin-A/C accumulation is not observed in young healthy vessels but is prevalent in medial vascular smooth muscle cells (VSMCs) from aged individuals and in atherosclerotic lesions, where it often colocalizes with senescent and degenerate VSMCs. Prelamin-A/C expression increases with age and disease. In normal aging, the accumulation of prelamin-A/C is caused in part by the down-regulation of ZMPSTE24/FACE1 in response to oxidative stress.

The protein localises to the nucleus lamina. It localises to the nucleus envelope. Its subcellular location is the nucleus. The protein resides in the nucleoplasm. It is found in the nucleus matrix. The protein localises to the nucleus speckle. Its function is as follows. Lamins are intermediate filament proteins that assemble into a filamentous meshwork, and which constitute the major components of the nuclear lamina, a fibrous layer on the nucleoplasmic side of the inner nuclear membrane. Lamins provide a framework for the nuclear envelope, bridging the nuclear envelope and chromatin, thereby playing an important role in nuclear assembly, chromatin organization, nuclear membrane and telomere dynamics. Lamin A and C also regulate matrix stiffness by conferring nuclear mechanical properties. The structural integrity of the lamina is strictly controlled by the cell cycle, as seen by the disintegration and formation of the nuclear envelope in prophase and telophase, respectively. Lamin A and C are present in equal amounts in the lamina of mammals. Also invoved in DNA repair: recruited by DNA repair proteins XRCC4 and IFFO1 to the DNA double-strand breaks (DSBs) to prevent chromosome translocation by immobilizing broken DNA ends. Required for normal development of peripheral nervous system and skeletal muscle and for muscle satellite cell proliferation. Required for osteoblastogenesis and bone formation. Also prevents fat infiltration of muscle and bone marrow, helping to maintain the volume and strength of skeletal muscle and bone. Required for cardiac homeostasis. In terms of biological role, prelamin-A/C can accelerate smooth muscle cell senescence. It acts to disrupt mitosis and induce DNA damage in vascular smooth muscle cells (VSMCs), leading to mitotic failure, genomic instability, and premature senescence. In Homo sapiens (Human), this protein is Prelamin-A/C (LMNA).